A 486-amino-acid polypeptide reads, in one-letter code: Cardiolipin synthase A (486 aa).

Transmembrane regions (helical) follow at residues 3-23 and 38-58; these read TFYT…IAGV and MAWL…YLSV. PLD phosphodiesterase domains follow at residues 219-246 and 399-426; these read MDLR…VDPR and EGGL…DMRS. Catalysis depends on residues His-224, Lys-226, Asp-231, His-404, Lys-406, and Asp-411.

It belongs to the phospholipase D family. Cardiolipin synthase subfamily. ClsA sub-subfamily.

Its subcellular location is the cell inner membrane. The enzyme catalyses 2 a 1,2-diacyl-sn-glycero-3-phospho-(1'-sn-glycerol) = a cardiolipin + glycerol. Functionally, catalyzes the reversible phosphatidyl group transfer from one phosphatidylglycerol molecule to another to form cardiolipin (CL) (diphosphatidylglycerol) and glycerol. This Salmonella gallinarum (strain 287/91 / NCTC 13346) protein is Cardiolipin synthase A.